The sequence spans 97 residues: Co-chaperonin GroES (97 aa).

This sequence belongs to the GroES chaperonin family. Heptamer of 7 subunits arranged in a ring. Interacts with the chaperonin GroEL.

Its subcellular location is the cytoplasm. Its function is as follows. Together with the chaperonin GroEL, plays an essential role in assisting protein folding. The GroEL-GroES system forms a nano-cage that allows encapsulation of the non-native substrate proteins and provides a physical environment optimized to promote and accelerate protein folding. GroES binds to the apical surface of the GroEL ring, thereby capping the opening of the GroEL channel. The chain is Co-chaperonin GroES from Yersinia enterocolitica.